Reading from the N-terminus, the 74-residue chain is MIRRALVFLVRVYQRLVSPLLPPACRFYPSCSAYAATALERHGALKGSALAARRLLRCHPFHPGGIDPVPESER.

This sequence belongs to the UPF0161 family.

The protein resides in the cell inner membrane. In terms of biological role, could be involved in insertion of integral membrane proteins into the membrane. The polypeptide is Putative membrane protein insertion efficiency factor (Anaeromyxobacter sp. (strain Fw109-5)).